A 422-amino-acid chain; its full sequence is Dihydroorotase (422 aa).

Zn(2+) is bound by residues H59 and H61. Substrate contacts are provided by residues 61–63 and N93; that span reads HFR. Residues D150, H177, and H230 each coordinate Zn(2+). N276 lines the substrate pocket. D303 contacts Zn(2+). The active site involves D303. H307 serves as a coordination point for substrate.

It belongs to the metallo-dependent hydrolases superfamily. DHOase family. Class I DHOase subfamily. Requires Zn(2+) as cofactor.

The catalysed reaction is (S)-dihydroorotate + H2O = N-carbamoyl-L-aspartate + H(+). The protein operates within pyrimidine metabolism; UMP biosynthesis via de novo pathway; (S)-dihydroorotate from bicarbonate: step 3/3. Functionally, catalyzes the reversible cyclization of carbamoyl aspartate to dihydroorotate. This chain is Dihydroorotase, found in Streptococcus pyogenes serotype M3 (strain ATCC BAA-595 / MGAS315).